The sequence spans 183 residues: Large ribosomal subunit protein uL6 (183 aa).

Belongs to the universal ribosomal protein uL6 family. As to quaternary structure, part of the 50S ribosomal subunit.

Functionally, this protein binds to the 23S rRNA, and is important in its secondary structure. It is located near the subunit interface in the base of the L7/L12 stalk, and near the tRNA binding site of the peptidyltransferase center. This is Large ribosomal subunit protein uL6 from Chlamydia abortus (strain DSM 27085 / S26/3) (Chlamydophila abortus).